We begin with the raw amino-acid sequence, 138 residues long: MKRNQVLFLTCAAAVVFLAVLHVGESAAVRSKDDPAPDKKESLKSKIFMQGSEASNFFKKRGKRSPKSQDEINAENRQRLSADERRREYYEEQRNEFENHVEEEQDEQEERSREQIEQWRQWHYDGLSPSYLYQRQNI.

Positions 1-26 are cleaved as a signal peptide; it reads MKRNQVLFLTCAAAVVFLAVLHVGES. A propeptide spans 28 to 64 (ucma-N); it reads AVRSKDDPAPDKKESLKSKIFMQGSEASNFFKKRGKR. A disordered region spans residues 58-116; sequence FKKRGKRSPKSQDEINAENRQRLSADERRREYYEEQRNEFENHVEEEQDEQEERSREQI. Residues 67–102 show a composition bias toward basic and acidic residues; that stretch reads KSQDEINAENRQRLSADERRREYYEEQRNEFENHVE. Positions 69–118 form a coiled coil; sequence QDEINAENRQRLSADERRREYYEEQRNEFENHVEEEQDEQEERSREQIEQ. A 4-carboxyglutamate mark is found at glutamate 71, glutamate 75, glutamate 84, glutamate 88, glutamate 91, glutamate 92, glutamate 96, glutamate 98, glutamate 102, glutamate 103, glutamate 107, glutamate 110, glutamate 114, and glutamate 117.

This sequence belongs to the UCMA family. Proteolytically cleaved by a furin-like convertase to generate a persistent C-terminal fragment found in almost the entire cartilage matrix, and affecting osteoblast differentiation. In terms of processing, sulfated on tyrosine residues.

The protein resides in the secreted. Its subcellular location is the extracellular space. It localises to the extracellular matrix. May be involved in the negative control of osteogenic differentiation of osteochondrogenic precursor cells in peripheral zones of fetal cartilage and at the cartilage-bone interface. In Xenopus tropicalis (Western clawed frog), this protein is Unique cartilage matrix-associated protein (ucma).